A 241-amino-acid polypeptide reads, in one-letter code: Small ribosomal subunit protein uS2 (241 aa).

It belongs to the universal ribosomal protein uS2 family.

The protein is Small ribosomal subunit protein uS2 of Klebsiella pneumoniae subsp. pneumoniae (strain ATCC 700721 / MGH 78578).